We begin with the raw amino-acid sequence, 128 residues long: Conopressin-conophysin (128 aa).

The N-terminal stretch at 1-27 (MTRSAMQMGRLTLVLCLLLLLLLTTQA) is a signal peptide. A disulfide bridge links C28 with C33. Glycine amide is present on G36. The propeptide occupies 37–44 (GKRDVDER). Intrachain disulfides connect C50–C90, C53–C64, C58–C80, C65–C70, C97–C115, C109–C127, and C116–C121.

The protein belongs to the vasopressin/oxytocin family. Expressed by the venom gland.

Its subcellular location is the secreted. In terms of biological role, targets vasopressin-oxytocin related receptors. Is more active on fish receptors than on their human counterparts, supporting an evolved role of this conopressin in the envenomation process. Acts as an agonist on zebrafish vasopressin receptors V1a1R (EC(50)=10.6 nM), V1a2R (EC(50)=44.06 nM, partial agonist), V2R (EC(50)=299.2 nM) and oxytocin receptor (EC(50)=353.73 nM, partial agonist). Shows a weaker activity on human receptors AVPR1B (EC(50)=51.92 nM), AVPR1A (EC(50)=123.78 nM), AVPR2 (EC(50)=299.2 nM) and oxytocin (OXTR) receptor (EC(50)=455.66 nM, partial agonist). In vivo, exhibits grooming and scratching behavior in mice, following intracerebral injection. The protein is Conopressin-conophysin of Conus geographus (Geography cone).